The sequence spans 143 residues: Flagellar assembly factor FliW (143 aa).

The protein belongs to the FliW family. Interacts with translational regulator CsrA and flagellin(s).

It is found in the cytoplasm. Functionally, acts as an anti-CsrA protein, binds CsrA and prevents it from repressing translation of its target genes, one of which is flagellin. Binds to flagellin and participates in the assembly of the flagellum. The protein is Flagellar assembly factor FliW of Clostridium botulinum (strain Langeland / NCTC 10281 / Type F).